We begin with the raw amino-acid sequence, 86 residues long: uncharacterized protein (86 aa).

This is an uncharacterized protein from African swine fever virus (strain Badajoz 1971 Vero-adapted) (Ba71V).